A 323-amino-acid chain; its full sequence is Lipoyl synthase (323 aa).

The segment covering 1-14 has biased composition (basic and acidic residues); that stretch reads MVTILDRTKPDDKR. The disordered stretch occupies residues 1–25; it reads MVTILDRTKPDDKRIRHPEKAHKPD. Residues Cys61, Cys66, Cys72, Cys87, Cys91, Cys94, and Ser300 each contribute to the [4Fe-4S] cluster site. In terms of domain architecture, Radical SAM core spans 73–289; sequence WEKKHATFMI…EDIAYTKGFL (217 aa).

This sequence belongs to the radical SAM superfamily. Lipoyl synthase family. It depends on [4Fe-4S] cluster as a cofactor.

Its subcellular location is the cytoplasm. It carries out the reaction [[Fe-S] cluster scaffold protein carrying a second [4Fe-4S](2+) cluster] + N(6)-octanoyl-L-lysyl-[protein] + 2 oxidized [2Fe-2S]-[ferredoxin] + 2 S-adenosyl-L-methionine + 4 H(+) = [[Fe-S] cluster scaffold protein] + N(6)-[(R)-dihydrolipoyl]-L-lysyl-[protein] + 4 Fe(3+) + 2 hydrogen sulfide + 2 5'-deoxyadenosine + 2 L-methionine + 2 reduced [2Fe-2S]-[ferredoxin]. It participates in protein modification; protein lipoylation via endogenous pathway; protein N(6)-(lipoyl)lysine from octanoyl-[acyl-carrier-protein]: step 2/2. In terms of biological role, catalyzes the radical-mediated insertion of two sulfur atoms into the C-6 and C-8 positions of the octanoyl moiety bound to the lipoyl domains of lipoate-dependent enzymes, thereby converting the octanoylated domains into lipoylated derivatives. The chain is Lipoyl synthase from Allorhizobium ampelinum (strain ATCC BAA-846 / DSM 112012 / S4) (Agrobacterium vitis (strain S4)).